The sequence spans 204 residues: Dephospho-CoA kinase (204 aa).

Residues 3-200 form the DPCK domain; that stretch reads VVAITGGIGS…ETYMAFASQQ (198 aa). 11-16 provides a ligand contact to ATP; that stretch reads GSGKTT.

Belongs to the CoaE family.

The protein localises to the cytoplasm. The catalysed reaction is 3'-dephospho-CoA + ATP = ADP + CoA + H(+). The protein operates within cofactor biosynthesis; coenzyme A biosynthesis; CoA from (R)-pantothenate: step 5/5. Its function is as follows. Catalyzes the phosphorylation of the 3'-hydroxyl group of dephosphocoenzyme A to form coenzyme A. This is Dephospho-CoA kinase from Aeromonas hydrophila.